Reading from the N-terminus, the 826-residue chain is 1,4-alpha-glucan-branching enzyme 1, chloroplastic/amyloplastic (826 aa).

A chloroplast-targeting transit peptide spans 1-58 (ATTTTTTHNSKNKQYLAKQKPVELTLGYQNPNGCKVCSFGSKGSIYQKVSSGFKGVSV). Aspartate 409 (nucleophile) is an active-site residue. Glutamate 464 (proton donor) is an active-site residue. The tract at residues 782–813 (DTDVARIPDVSMESEDSNLDRIEDNSEDAVDA) is disordered.

Belongs to the glycosyl hydrolase 13 family. GlgB subfamily. Monomer. As to expression, expressed in roots, leaves, stipules, pods and flowers.

Its subcellular location is the plastid. It is found in the chloroplast. The protein localises to the amyloplast. The enzyme catalyses Transfers a segment of a (1-&gt;4)-alpha-D-glucan chain to a primary hydroxy group in a similar glucan chain.. The protein operates within glycan biosynthesis; starch biosynthesis. Functionally, catalyzes the formation of the alpha-1,6-glucosidic linkages in starch by scission of a 1,4-alpha-linked oligosaccharide from growing alpha-1,4-glucan chains and the subsequent attachment of the oligosaccharide to the alpha-1,6 position. May preferentially transfer long chains during branching. This chain is 1,4-alpha-glucan-branching enzyme 1, chloroplastic/amyloplastic (SBEII), found in Pisum sativum (Garden pea).